Reading from the N-terminus, the 241-residue chain is tRNA pseudouridine synthase A (241 aa).

Asp51 serves as the catalytic Nucleophile. Tyr110 is a binding site for substrate.

The protein belongs to the tRNA pseudouridine synthase TruA family. In terms of assembly, homodimer.

The enzyme catalyses uridine(38/39/40) in tRNA = pseudouridine(38/39/40) in tRNA. In terms of biological role, formation of pseudouridine at positions 38, 39 and 40 in the anticodon stem and loop of transfer RNAs. The chain is tRNA pseudouridine synthase A from Campylobacter jejuni subsp. jejuni serotype O:2 (strain ATCC 700819 / NCTC 11168).